The chain runs to 316 residues: Probable cell division protein WhiA (316 aa).

Residues 275–309 constitute a DNA-binding region (H-T-H motif); sequence TLKELGEMVASGKISKSGINHRLRKLDEIAEQLRT.

This sequence belongs to the WhiA family.

In terms of biological role, involved in cell division and chromosome segregation. This chain is Probable cell division protein WhiA, found in Bacillus velezensis (strain DSM 23117 / BGSC 10A6 / LMG 26770 / FZB42) (Bacillus amyloliquefaciens subsp. plantarum).